The primary structure comprises 476 residues: Serine/threonine-protein kinase Chk1 (476 aa).

Residues 1-265 (MAVPFVEDWD…IPDIKKDRWY (265 aa)) are interaction with CLSPN. Positions 9–265 (WDLVQTLGEG…IPDIKKDRWY (257 aa)) constitute a Protein kinase domain. Residues 15-23 (LGEGAYGEV) and lysine 38 contribute to the ATP site. Aspartate 130 (proton acceptor) is an active-site residue. A Glycyl lysine isopeptide (Lys-Gly) (interchain with G-Cter in ubiquitin) cross-link involves residue lysine 132. A disordered region spans residues 270–327 (KKGAKRPRVTSGGVSESPSGFSKHIQSNLDFSPVNSASSEENVKYSSSQPEPRTGLSL). A phosphoserine mark is found at serine 280, serine 286, serine 296, and serine 301. Over residues 281-320 (GGVSESPSGFSKHIQSNLDFSPVNSASSEENVKYSSSQPE) the composition is skewed to polar residues. Serine 317 carries the phosphoserine; by ATM and ATR modification. A Phosphoserine modification is found at serine 331. Serine 345 is subject to Phosphoserine; by ATM and ATR. Residues 391-476 (QCLKETCEKL…SSQKIWLPAT (86 aa)) form an autoinhibitory region region. A Glycyl lysine isopeptide (Lys-Gly) (interchain with G-Cter in ubiquitin) cross-link involves residue lysine 436. A phosphoserine mark is found at serine 467 and serine 468.

This sequence belongs to the protein kinase superfamily. CAMK Ser/Thr protein kinase family. NIM1 subfamily. As to quaternary structure, interacts (phosphorylated by ATR) with RAD51. Interacts with and phosphorylates CLSPN, an adapter protein that regulates the ATR-dependent phosphorylation of CHEK1. Interacts with BRCA1. Interacts with and phosphorylates CDC25A, CDC25B and CDC25C. Interacts with FBXO6, which regulates CHEK1. Interacts with PPM1D, which regulates CHEK1 through dephosphorylation. Interacts with TIMELESS; DNA damage-dependent. Interacts with FEM1B; activates CHEK1 in response to stress. Interacts with TLK1. Interacts with XPO1 and YWHAZ. Interacts with CDK5RAP3; antagonizes CHEK1. In terms of assembly, isoform 1 associates with isoform 2, the interaction is disrupted upon phosphorylation by ATR. Post-translationally, phosphorylated by ATR in a RAD17-dependent manner in response to ultraviolet irradiation and inhibition of DNA replication. Phosphorylated by ATM in response to ionizing irradiation. ATM and ATR can both phosphorylate Ser-317 and Ser-345 and this results in enhanced kinase activity. Phosphorylation at Ser-345 induces a change in the conformation of the protein, activates the kinase activity and is a prerequisite for interaction with FBXO6 and subsequent ubiquitination at Lys-436. Phosphorylation at Ser-345 also increases binding to 14-3-3 proteins and promotes nuclear retention. Conversely, dephosphorylation at Ser-345 by PPM1D may contribute to exit from checkpoint mediated cell cycle arrest. Phosphorylation at Ser-280 by AKT1/PKB, may promote mono and/or diubiquitination. Also phosphorylated at undefined residues during mitotic arrest, resulting in decreased activity. In terms of processing, ubiquitinated. Mono or diubiquitination promotes nuclear exclusion. The activated form (phosphorylated on Ser-345) is polyubiquitinated at Lys-436 by some SCF-type E3 ubiquitin ligase complex containing FBXO6 promoting its degradation. Ubiquitination and degradation are required to terminate the checkpoint and ensure that activated CHEK1 does not accumulate as cells progress through S phase, when replication forks encounter transient impediments during normal DNA replication. 'Lys-63'-mediated ubiquitination by TRAF4 at Lys-132 activates cell cycle arrest and activation of DNA repair. Proteolytically cleaved at the C-terminus by SPRTN during normal DNA replication, thereby promoting CHEK1 removal from chromatin and activating the protein kinase activity. As to expression, expressed ubiquitously with the most abundant expression in thymus, testis, small intestine and colon.

The protein localises to the nucleus. The protein resides in the chromosome. It localises to the cytoplasm. It is found in the cytoskeleton. Its subcellular location is the microtubule organizing center. The protein localises to the centrosome. It carries out the reaction L-seryl-[protein] + ATP = O-phospho-L-seryl-[protein] + ADP + H(+). The catalysed reaction is L-threonyl-[protein] + ATP = O-phospho-L-threonyl-[protein] + ADP + H(+). With respect to regulation, activated through phosphorylation predominantly by ATR but also by ATM in response to DNA damage or inhibition of DNA replication. Activation is modulated by several mediators including CLSPN, BRCA1 and FEM1B. Proteolytic cleavage at the C-terminus by SPRTN during normal DNA replication activates the protein kinase activity. In terms of biological role, serine/threonine-protein kinase which is required for checkpoint-mediated cell cycle arrest and activation of DNA repair in response to the presence of DNA damage or unreplicated DNA. May also negatively regulate cell cycle progression during unperturbed cell cycles. This regulation is achieved by a number of mechanisms that together help to preserve the integrity of the genome. Recognizes the substrate consensus sequence [R-X-X-S/T]. Binds to and phosphorylates CDC25A, CDC25B and CDC25C. Phosphorylation of CDC25A at 'Ser-178' and 'Thr-507' and phosphorylation of CDC25C at 'Ser-216' creates binding sites for 14-3-3 proteins which inhibit CDC25A and CDC25C. Phosphorylation of CDC25A at 'Ser-76', 'Ser-124', 'Ser-178', 'Ser-279' and 'Ser-293' promotes proteolysis of CDC25A. Phosphorylation of CDC25A at 'Ser-76' primes the protein for subsequent phosphorylation at 'Ser-79', 'Ser-82' and 'Ser-88' by NEK11, which is required for polyubiquitination and degradation of CDCD25A. Inhibition of CDC25 leads to increased inhibitory tyrosine phosphorylation of CDK-cyclin complexes and blocks cell cycle progression. Also phosphorylates NEK6. Binds to and phosphorylates RAD51 at 'Thr-309', which promotes the release of RAD51 from BRCA2 and enhances the association of RAD51 with chromatin, thereby promoting DNA repair by homologous recombination. Phosphorylates multiple sites within the C-terminus of TP53, which promotes activation of TP53 by acetylation and promotes cell cycle arrest and suppression of cellular proliferation. Also promotes repair of DNA cross-links through phosphorylation of FANCE. Binds to and phosphorylates TLK1 at 'Ser-743', which prevents the TLK1-dependent phosphorylation of the chromatin assembly factor ASF1A. This may enhance chromatin assembly both in the presence or absence of DNA damage. May also play a role in replication fork maintenance through regulation of PCNA. May regulate the transcription of genes that regulate cell-cycle progression through the phosphorylation of histones. Phosphorylates histone H3.1 (to form H3T11ph), which leads to epigenetic inhibition of a subset of genes. May also phosphorylate RB1 to promote its interaction with the E2F family of transcription factors and subsequent cell cycle arrest. Phosphorylates SPRTN, promoting SPRTN recruitment to chromatin. Reduces replication stress and activates the G2/M checkpoint, by phosphorylating and inactivating PABIR1/FAM122A and promoting the serine/threonine-protein phosphatase 2A-mediated dephosphorylation and stabilization of WEE1 levels and activity. Functionally, endogenous repressor of isoform 1, interacts with, and antagonizes CHK1 to promote the S to G2/M phase transition. In Homo sapiens (Human), this protein is Serine/threonine-protein kinase Chk1 (CHEK1).